The primary structure comprises 704 residues: Matrix metalloproteinase-9 (704 aa).

The N-terminal stretch at 1 to 19 (MSPRQPLVLVFLVLGCCSA) is a signal peptide. The propeptide at 20-106 (APRPHKPTVV…PRCGVPDLGK (87 aa)) is activation peptide. Asparagine 38 carries an N-linked (GlcNAc...) asparagine glycan. Residues 97 to 104 (PRCGVPDL) carry the Cysteine switch motif. Residue cysteine 99 coordinates Zn(2+). Asparagine 127 carries N-linked (GlcNAc...) asparagine glycosylation. The Ca(2+) site is built by aspartate 131 and aspartate 165. Zn(2+) is bound by residues histidine 175 and aspartate 177. Ca(2+)-binding residues include aspartate 182, glycine 183, asparagine 185, and leucine 187. Residue histidine 190 participates in Zn(2+) binding. The Ca(2+) site is built by glycine 197, glutamine 199, and aspartate 201. Histidine 203 lines the Zn(2+) pocket. Positions 205, 206, and 208 each coordinate Ca(2+). 3 Fibronectin type-II domains span residues 225-273 (ADGA…FCPS), 283-331 (GDGK…FCPT), and 342-390 (SAGE…FCPD). 6 cysteine pairs are disulfide-bonded: cysteine 230–cysteine 256, cysteine 244–cysteine 271, cysteine 288–cysteine 314, cysteine 302–cysteine 329, cysteine 347–cysteine 373, and cysteine 361–cysteine 388. Histidine 401 contacts Zn(2+). The active site involves glutamate 402. Zn(2+) contacts are provided by histidine 405 and histidine 411. A disordered region spans residues 434-507 (DDVRGIQHLY…PSEAPTVPVD (74 aa)). 2 stretches are compositionally biased toward pro residues: residues 450-461 (EPQPPTAPPTAP) and 483-496 (TGPPAAGPTGPPTA). Cysteine 513 and cysteine 701 form a disulfide bridge. 4 Hemopexin repeats span residues 515–560 (VNIF…WPAL), 561–605 (PRKL…GLGP), 607–654 (VTQV…YPGV), and 655–701 (PLNT…ILQC).

It belongs to the peptidase M10A family. In terms of assembly, exists as monomer or homodimer; disulfide-linked. Also exists as heterodimer with LCN2. Macrophages and transformed cell lines produce only the monomeric form. Interacts with ECM1. Zn(2+) is required as a cofactor. It depends on Ca(2+) as a cofactor. N- and O-glycosylated.

The protein localises to the secreted. It localises to the extracellular space. The protein resides in the extracellular matrix. The catalysed reaction is Cleavage of gelatin types I and V and collagen types IV and V.. Its function is as follows. Matrix metalloproteinase that plays an essential role in local proteolysis of the extracellular matrix and in leukocyte migration. Could play a role in bone osteoclastic resorption. Cleaves KiSS1 at a Gly-|-Leu bond. Cleaves NINJ1 to generate the Secreted ninjurin-1 form. Cleaves type IV and type V collagen into large C-terminal three quarter fragments and shorter N-terminal one quarter fragments. Degrades fibronectin but not laminin or Pz-peptide. The chain is Matrix metalloproteinase-9 (MMP9) from Canis lupus familiaris (Dog).